Consider the following 156-residue polypeptide: Snaclec jerdonibitin subunit alpha (156 aa).

The N-terminal stretch at 1–23 is a signal peptide; sequence MGRFIFVSFGLLVVFLSLSGTGA. 3 disulfides stabilise this stretch: cysteine 25–cysteine 36, cysteine 53–cysteine 150, and cysteine 125–cysteine 142. The 120-residue stretch at 32 to 151 folds into the C-type lectin domain; that stretch reads FRQYCYRVFK…CGQQHLFMCK (120 aa).

It belongs to the snaclec family. In terms of assembly, heterodimer of subunits alpha and beta; disulfide-linked. As to expression, expressed by the venom gland.

It is found in the secreted. Its function is as follows. Snaclec that dose-dependently inhibits platelet aggregation induced by ristocetin or low-dose thrombin, but not by high-dose thrombin. Binds to GPIbalpha (GP1BA). In vivo, also dose-dependently induces thrombocytopenia of mice and platelet counts remains at very low level even after 18 hours intravenous injection. This Protobothrops jerdonii (Jerdon's pitviper) protein is Snaclec jerdonibitin subunit alpha.